We begin with the raw amino-acid sequence, 319 residues long: Beta-sarcoglycan (319 aa).

The segment covering 1–10 has biased composition (low complexity); that stretch reads MAAAAAAAAA. The segment at 1-33 is disordered; sequence MAAAAAAAAAEQQSSNGPVKKSMREKAVERRNV. Over 1–66 the chain is Cytoplasmic; the sequence is MAAAAAAAAA…GLRGRKGNLA (66 aa). The segment covering 22 to 33 has biased composition (basic and acidic residues); the sequence is SMREKAVERRNV. Residues 67–87 form a helical; Signal-anchor for type II membrane protein membrane-spanning segment; that stretch reads ICVIILLFILAVINLIITLVI. Over 88–318 the chain is Extracellular; sequence WAVIRIGPNG…QISDNPCGNT (231 aa). N159, N212, and N259 each carry an N-linked (GlcNAc...) asparagine glycan. 2 cysteine pairs are disulfide-bonded: C289–C315 and C291–C308.

The protein belongs to the sarcoglycan beta/delta/gamma/zeta family. In terms of assembly, cross-link to form 2 major subcomplexes: one consisting of SGCB, SGCD and SGCG and the other consisting of SGCB and SGCD. The association between SGCB and SGCG is particularly strong while SGCA is loosely associated with the other sarcoglycans. Post-translationally, disulfide bonds are present.

It is found in the cell membrane. The protein resides in the sarcolemma. It localises to the cytoplasm. The protein localises to the cytoskeleton. In terms of biological role, component of the sarcoglycan complex, a subcomplex of the dystrophin-glycoprotein complex which forms a link between the F-actin cytoskeleton and the extracellular matrix. The protein is Beta-sarcoglycan (SGCB) of Pongo abelii (Sumatran orangutan).